The chain runs to 81 residues: uncharacterized protein (81 aa).

A signal peptide spans 1 to 31 (MRYNSFLSVLALFNVLLWFTFILAISMTFSA). Residues 52–74 (WFFVLLPYVIGLFFAIFDSATIG) form a helical membrane-spanning segment.

Its subcellular location is the membrane. This is an uncharacterized protein from Pasteurella multocida (strain Pm70).